Reading from the N-terminus, the 228-residue chain is MSYVFVNDSSQTNVPLLQACIDGDFNYSKRLLESGFDPNIRDSRGRTGLHLAAARGNVDICQLLHKFGADLLATDYQGNTALHLCGHVDTIQFLVSNGLKIDICNHQGATPLVLAKRRGVNKDVIRLLEFLEEQEVKGFNRGTHSKLETMQTAESESAMESHSLLNPNLQQGEGVLSSFRTTWQEFVEDLGFWRVLLLIFVIALLSLGIAYYVSGVLPFVENQPELVH.

ANK repeat units lie at residues 11-40 (QTNVPLLQACIDGDFNYSKRLLESGFDPNI), 44-73 (RGRTGLHLAAARGNVDICQLLHKFGADLLA), 77-103 (QGNTALHLCGHVDTIQFLVSNGLKIDI), and 107-138 (QGATPLVLAKRRGVNKDVIRLLEFLEEQEVKG). The chain crosses the membrane as a helical span at residues 195–215 (VLLLIFVIALLSLGIAYYVSG).

The protein localises to the membrane. This is Ankyrin repeat domain-containing protein 46 (ANKRD46) from Pongo abelii (Sumatran orangutan).